A 47-amino-acid chain; its full sequence is Photosystem II reaction center protein K (47 aa).

Residues 1–10 (MALINFDLLA) constitute a propeptide that is removed on maturation. Residues 26–46 (LPLIPLFFFLLVFVWQAAVGF) traverse the membrane as a helical segment.

Belongs to the PsbK family. In terms of assembly, PSII is composed of 1 copy each of membrane proteins PsbA, PsbB, PsbC, PsbD, PsbE, PsbF, PsbH, PsbI, PsbJ, PsbK, PsbL, PsbM, PsbT, PsbX, PsbY, Psb30/Ycf12, peripheral proteins PsbO, CyanoQ (PsbQ), PsbU, PsbV and a large number of cofactors. It forms dimeric complexes.

The protein resides in the cellular thylakoid membrane. Functionally, one of the components of the core complex of photosystem II (PSII). PSII is a light-driven water:plastoquinone oxidoreductase that uses light energy to abstract electrons from H(2)O, generating O(2) and a proton gradient subsequently used for ATP formation. It consists of a core antenna complex that captures photons, and an electron transfer chain that converts photonic excitation into a charge separation. This is Photosystem II reaction center protein K from Prochlorococcus marinus (strain NATL1A).